The chain runs to 466 residues: Gamma-glutamylpolyamine synthetase GlnA3 (466 aa).

A GS catalytic domain is found at 127 to 466 (GRTVLRRIVA…GVAAAYRWKY (340 aa)). Residues glutamate 151 and glutamate 153 each contribute to the Mg(2+) site. Glutamate 202 provides a ligand contact to ATP. 2 residues coordinate Mg(2+): glutamate 207 and glutamate 214. Glycine 259 is a binding site for L-glutamate. Histidine 263 is a Mg(2+) binding site. Position 267 (serine 267) interacts with ATP. L-glutamate contacts are provided by arginine 316 and arginine 334. Residues arginine 334 and arginine 339 each contribute to the ATP site. Position 355 (glutamate 355) interacts with Mg(2+).

It belongs to the glutamine synthetase family. It depends on Mg(2+) as a cofactor. As to expression, expressed in mycelium.

It catalyses the reaction spermine + L-glutamate + ATP = gamma-L-glutamylspermine + ADP + phosphate + H(+). It carries out the reaction spermidine + L-glutamate + ATP = gamma-L-glutamylspermidine + ADP + phosphate + H(+). The enzyme catalyses putrescine + L-glutamate + ATP = gamma-L-glutamylputrescine + ADP + phosphate + H(+). The catalysed reaction is cadaverine + L-glutamate + ATP = gamma-L-glutamylcadaverine + ADP + phosphate + H(+). It functions in the pathway amine and polyamine degradation; putrescine degradation. The protein operates within amine and polyamine degradation; spermidine degradation. It participates in amine and polyamine degradation; spermine degradation. Its function is as follows. Involved in the catabolism of polyamines. Catalyzes the ATP-dependent gamma-glutamylation of polyamines. Substrates include putrescine, cadaverine, spermidine and spermine, with a preference for long-chain polyamines spermidine and spermine. Is not able to compensate for the loss of glutamine synthetases (GSs). No complementation of the L-glutamine auxotrophy of an E.coli glnA mutant. Involved in morphological differentiation and in the production of secondary metabolites. Together with GlnA2, enables survival of S.coelicolor under exposure to high local environmental polyamine concentrations, which is toxic to the cells. This is Gamma-glutamylpolyamine synthetase GlnA3 from Streptomyces coelicolor (strain ATCC BAA-471 / A3(2) / M145).